The chain runs to 129 residues: MFCNLSPMIDFDALKSEKGLILAVVQDQLSREVLMCAYMNREALEKTVETGITHFWSRSRQQLWKKGETSGHVQKVKEIRVDCDMDSLLLLVEQVGGACHMGYRSCFYRNLEGEVVGEKVFEPDEVYKS.

Residue aspartate 82 coordinates Mg(2+). Cysteine 83 provides a ligand contact to Zn(2+). Residues aspartate 84 and aspartate 86 each contribute to the Mg(2+) site. Residues cysteine 99 and cysteine 106 each contribute to the Zn(2+) site.

Belongs to the PRA-CH family. In terms of assembly, homodimer. The cofactor is Mg(2+). Zn(2+) is required as a cofactor.

The protein localises to the cytoplasm. It catalyses the reaction 1-(5-phospho-beta-D-ribosyl)-5'-AMP + H2O = 1-(5-phospho-beta-D-ribosyl)-5-[(5-phospho-beta-D-ribosylamino)methylideneamino]imidazole-4-carboxamide. The protein operates within amino-acid biosynthesis; L-histidine biosynthesis; L-histidine from 5-phospho-alpha-D-ribose 1-diphosphate: step 3/9. In terms of biological role, catalyzes the hydrolysis of the adenine ring of phosphoribosyl-AMP. This Methanosarcina barkeri (strain Fusaro / DSM 804) protein is Phosphoribosyl-AMP cyclohydrolase.